Reading from the N-terminus, the 819-residue chain is THO complex subunit 5B (819 aa).

Residues 285–332 are disordered; it reads ARQQSRKDSGMSSNTESSRLEDDGPDDDDDGQRRRKRPKKLTSKEGSD.

This sequence belongs to the THOC5 family. In terms of assembly, component of the THO complex, which is composed of THO1, THO2, THO3, THO5, THO6 and THO7.

The protein resides in the nucleus. Functionally, acts as a component of the THO subcomplex of the TREX complex which is thought to couple mRNA transcription, processing and nuclear export. The sequence is that of THO complex subunit 5B (THO5B) from Arabidopsis thaliana (Mouse-ear cress).